Reading from the N-terminus, the 1159-residue chain is ABC transporter G family member 24 (1159 aa).

2 helical membrane passes run 11 to 31 (FNSILKSILLLLLLFINGNNC) and 415 to 435 (VGSGVGFIGLTLLIGAIFLIF). Positions 454-707 (LSFHNISCYV…FIKQKIAGMT (254 aa)) constitute an ABC transporter domain. 497–504 (GLSGSGKT) lines the ATP pocket. Residues 752 to 846 (QSTSPALSSN…DNNNKNNDDD (95 aa)) form a disordered region. Low complexity-rich tracts occupy residues 759 to 768 (SSNSNNSDIN) and 775 to 784 (INNPHNQNIH). Residues 785–795 (HQQHHHHHRHI) show a composition bias toward basic residues. The segment covering 822 to 841 (DNINNNNNNNKVKNNDNNNK) has biased composition (low complexity). The ABC transmembrane type-2 domain occupies 902–1154 (FLLRTTYFVH…LLAYVFLRFL (253 aa)). The next 6 membrane-spanning stretches (helical) occupy residues 909-929 (FVHIFVGLTLGYLFWKLPANL), 937-957 (FGAMFFMTALLSFGSITSLDL), 1005-1025 (YMIGLRPGILHFIYFLISLVL), 1047-1067 (ANMVSILLLFVFLLFDGFLLA), 1074-1094 (YLIGLVWISFMSYGLEIPVVN), and 1135-1155 (VLLGMIVGYLLLAYVFLRFLV).

It belongs to the ABC transporter superfamily. ABCG family. Eye pigment precursor importer (TC 3.A.1.204) subfamily.

It localises to the membrane. This is ABC transporter G family member 24 (abcG24) from Dictyostelium discoideum (Social amoeba).